Reading from the N-terminus, the 260-residue chain is Pyridoxine 5'-phosphate synthase (260 aa).

Position 15 (Asn15) interacts with 3-amino-2-oxopropyl phosphate. 17–18 (DH) provides a ligand contact to 1-deoxy-D-xylulose 5-phosphate. A 3-amino-2-oxopropyl phosphate-binding site is contributed by Arg26. His51 (proton acceptor) is an active-site residue. The 1-deoxy-D-xylulose 5-phosphate site is built by Arg53 and His58. The active-site Proton acceptor is Glu78. Thr108 serves as a coordination point for 1-deoxy-D-xylulose 5-phosphate. The Proton donor role is filled by His199. Residues Gly200 and 221–222 (GH) contribute to the 3-amino-2-oxopropyl phosphate site.

The protein belongs to the PNP synthase family. In terms of assembly, homooctamer; tetramer of dimers.

It localises to the cytoplasm. It carries out the reaction 3-amino-2-oxopropyl phosphate + 1-deoxy-D-xylulose 5-phosphate = pyridoxine 5'-phosphate + phosphate + 2 H2O + H(+). The protein operates within cofactor biosynthesis; pyridoxine 5'-phosphate biosynthesis; pyridoxine 5'-phosphate from D-erythrose 4-phosphate: step 5/5. Functionally, catalyzes the complicated ring closure reaction between the two acyclic compounds 1-deoxy-D-xylulose-5-phosphate (DXP) and 3-amino-2-oxopropyl phosphate (1-amino-acetone-3-phosphate or AAP) to form pyridoxine 5'-phosphate (PNP) and inorganic phosphate. The polypeptide is Pyridoxine 5'-phosphate synthase (Cupriavidus taiwanensis (strain DSM 17343 / BCRC 17206 / CCUG 44338 / CIP 107171 / LMG 19424 / R1) (Ralstonia taiwanensis (strain LMG 19424))).